A 227-amino-acid polypeptide reads, in one-letter code: Ashwin (227 aa).

Basic and acidic residues predominate over residues 71–84 (LPRSRWGKRMEKSR). The segment at 71-227 (LPRSRWGKRM…KKKIQHITWP (157 aa)) is disordered. The span at 88-98 (SSSSTHSSSTD) shows a compositional bias: low complexity. Positions 153–173 (GASTNCSSSNFSNRTPVSSSG) are enriched in polar residues. The span at 178-191 (SPSNHSNSSVHSNN) shows a compositional bias: low complexity. The segment covering 204 to 219 (GEPDTAKDIKSPETKK) has biased composition (basic and acidic residues).

The protein belongs to the ashwin family.

The protein resides in the nucleus. This is Ashwin from Danio rerio (Zebrafish).